Here is a 374-residue protein sequence, read N- to C-terminus: UPF0754 membrane protein SAS1767 (374 aa).

Transmembrane regions (helical) follow at residues 4-24 (LFII…TNVI) and 354-374 (SLGF…AIFV).

It belongs to the UPF0754 family.

The protein resides in the cell membrane. The sequence is that of UPF0754 membrane protein SAS1767 from Staphylococcus aureus (strain MSSA476).